A 565-amino-acid chain; its full sequence is Anaphase-promoting complex subunit 7 (565 aa).

10 TPR repeats span residues 101–134, 169–202, 203–236, 237–270, 339–372, 373–406, 407–439, 442–474, 475–508, and 509–531; these read EIEV…RQRT, LDAI…LDWL, SVWI…LRDN, VDLL…DPYL, VQAL…APCR, LDCY…LGAN, AQTL…AQRP, VKAV…NQSD, CVLH…DPND, and QKSL…TQEE. The residue at position 229 (lysine 229) is an N6-acetyllysine. Positions 513–523 are enriched in basic and acidic residues; the sequence is EGMQKMEKEES. The interval 513 to 565 is disordered; that stretch reads EGMQKMEKEESPTDATQEEDVDDMEGSGEEGDLEGSDSEAAQWADQEQWFGMQ. Acidic residues predominate over residues 528-549; sequence TQEEDVDDMEGSGEEGDLEGSD.

Belongs to the APC7 family. V-shaped homodimer. The mammalian APC/C is composed at least of 14 distinct subunits ANAPC1, ANAPC2, CDC27/APC3, ANAPC4, ANAPC5, CDC16/APC6, ANAPC7, CDC23/APC8, ANAPC10, ANAPC11, CDC26/APC12, ANAPC13, ANAPC15 and ANAPC16 that assemble into a complex of at least 19 chains with a combined molecular mass of around 1.2 MDa; APC/C interacts with FZR1 and FBXO5.

It is found in the cytoplasm. The protein resides in the cytoskeleton. The protein localises to the nucleus. It localises to the spindle. Its pathway is protein modification; protein ubiquitination. Component of the anaphase promoting complex/cyclosome (APC/C), a cell cycle-regulated E3 ubiquitin ligase that controls progression through mitosis and the G1 phase of the cell cycle. The APC/C complex acts by mediating ubiquitination and subsequent degradation of target proteins: it mainly mediates the formation of 'Lys-11'-linked polyubiquitin chains and, to a lower extent, the formation of 'Lys-48'- and 'Lys-63'-linked polyubiquitin chains. The APC/C complex catalyzes assembly of branched 'Lys-11'-/'Lys-48'-linked branched ubiquitin chains on target proteins. APC7 is not required for the assembly of the APC/C complex, but has an enzyme-substrate adapter activity mediating the processive ubiquitination of specific substrates. Involved in brain development through the specific ubiquitination and clearance of MKI67 from constitutive heterochromatin after neuronal progenitors exit mitosis. The polypeptide is Anaphase-promoting complex subunit 7 (Anapc7) (Mus musculus (Mouse)).